Here is a 372-residue protein sequence, read N- to C-terminus: Carbamoyl phosphate synthase small chain (372 aa).

Residues 1–184 are CPSase; sequence MKAYIYLEND…SFQKFNDAKR (184 aa). Residues S45, G240, and G242 each contribute to the L-glutamine site. The region spanning 188-372 is the Glutamine amidotransferase type-1 domain; that stretch reads KVAVIDYGVK…YIFKEFMNLM (185 aa). C268 serves as the catalytic Nucleophile. L-glutamine is bound by residues L269, Q272, N310, and Y313. Residues H351 and E353 contribute to the active site.

Belongs to the CarA family. As to quaternary structure, composed of two chains; the small (or glutamine) chain promotes the hydrolysis of glutamine to ammonia, which is used by the large (or ammonia) chain to synthesize carbamoyl phosphate. Tetramer of heterodimers (alpha,beta)4.

The enzyme catalyses hydrogencarbonate + L-glutamine + 2 ATP + H2O = carbamoyl phosphate + L-glutamate + 2 ADP + phosphate + 2 H(+). It carries out the reaction L-glutamine + H2O = L-glutamate + NH4(+). The protein operates within amino-acid biosynthesis; L-arginine biosynthesis; carbamoyl phosphate from bicarbonate: step 1/1. It participates in pyrimidine metabolism; UMP biosynthesis via de novo pathway; (S)-dihydroorotate from bicarbonate: step 1/3. Functionally, small subunit of the glutamine-dependent carbamoyl phosphate synthetase (CPSase). CPSase catalyzes the formation of carbamoyl phosphate from the ammonia moiety of glutamine, carbonate, and phosphate donated by ATP, constituting the first step of 2 biosynthetic pathways, one leading to arginine and/or urea and the other to pyrimidine nucleotides. The small subunit (glutamine amidotransferase) binds and cleaves glutamine to supply the large subunit with the substrate ammonia. In Campylobacter jejuni subsp. jejuni serotype O:2 (strain ATCC 700819 / NCTC 11168), this protein is Carbamoyl phosphate synthase small chain.